A 247-amino-acid polypeptide reads, in one-letter code: Terpene cyclase ausL (247 aa).

The next 6 helical transmembrane spans lie at 49–69 (AIAV…AWIY), 75–95 (HWQG…AATL), 114–134 (LVLL…CLAL), 138–158 (GALG…SGAV), 171–191 (SLVI…KLCI), and 206–226 (PMCW…PVLY).

The protein belongs to the paxB family.

It is found in the membrane. It participates in secondary metabolite biosynthesis; terpenoid biosynthesis. Its function is as follows. Terpene cyclase; part of the gene cluster that mediates the biosynthesis of calidodehydroaustin, a fungal meroterpenoid. The first step of the pathway is the synthesis of 3,5-dimethylorsellinic acid by the polyketide synthase ausA. 3,5-dimethylorsellinic acid is then prenylated by the polyprenyl transferase ausN. Further epoxidation by the FAD-dependent monooxygenase ausM and cyclization by the probable terpene cyclase ausL lead to the formation of protoaustinoid A. Protoaustinoid A is then oxidized to spiro-lactone preaustinoid A3 by the combined action of the FAD-binding monooxygenases ausB and ausC, and the dioxygenase ausE. Acid-catalyzed keto-rearrangement and ring contraction of the tetraketide portion of preaustinoid A3 by ausJ lead to the formation of preaustinoid A4. The aldo-keto reductase ausK, with the help of ausH, is involved in the next step by transforming preaustinoid A4 into isoaustinone which is in turn hydroxylated by the P450 monooxygenase ausI to form austinolide. The cytochrome P450 monooxygenase ausG modifies austinolide to austinol. Austinol is further acetylated to austin by the O-acetyltransferase ausP, which spontaneously changes to dehydroaustin. The cytochrome P450 monooxygenase ausR then converts dehydroaustin is into 7-dehydrodehydroaustin. The hydroxylation catalyzed by ausR permits the O-acetyltransferase ausQ to add an additional acetyl group to the molecule, leading to the formation of acetoxydehydroaustin. The short chain dehydrogenase ausT catalyzes the reduction of the double bond present between carbon atoms 1 and 2 to convert 7-dehydrodehydroaustin into 1,2-dihydro-7-hydroxydehydroaustin. AusQ catalyzes not only an acetylation reaction but also the addition of the PKS ausV diketide product to 1,2-dihydro-7-hydroxydehydroaustin, forming precalidodehydroaustin. Finally, the iron/alpha-ketoglutarate-dependent dioxygenase converts precalidodehydroaustin into calidodehydroaustin. In Aspergillus calidoustus, this protein is Terpene cyclase ausL.